We begin with the raw amino-acid sequence, 1029 residues long: Putative B3 domain-containing protein Os03g0621600 (1029 aa).

3 consecutive DNA-binding regions (TF-B3) follow at residues 147-240 (DTYF…FDPS), 339-430 (VAVM…RKMK), and 450-543 (EKYF…FDPS). The interval 572 to 605 (TSYHDQPKGNKHWMQKDSSSKGNKIGNTRSSNTP) is disordered. Residues 591–605 (SKGNKIGNTRSSNTP) show a composition bias toward polar residues. Residues 731–824 (YKNFFKVMIG…KLKVLIFGPS (94 aa)) constitute a DNA-binding region (TF-B3 4). The span at 852–867 (SSNSHDLPVKSPQNVS) shows a compositional bias: polar residues. Positions 852–882 (SSNSHDLPVKSPQNVSKSEKQWDSSEQENDT) are disordered. Positions 934–1029 (GCILRKSRVH…SMNVHIIPKK (96 aa)) form a DNA-binding region, TF-B3 5.

It is found in the nucleus. The chain is Putative B3 domain-containing protein Os03g0621600 from Oryza sativa subsp. japonica (Rice).